A 304-amino-acid polypeptide reads, in one-letter code: Sulfate adenylyltransferase subunit 2 1 (304 aa).

This sequence belongs to the PAPS reductase family. CysD subfamily. Heterodimer composed of CysD, the smaller subunit, and CysN.

It catalyses the reaction sulfate + ATP + H(+) = adenosine 5'-phosphosulfate + diphosphate. It participates in sulfur metabolism; hydrogen sulfide biosynthesis; sulfite from sulfate: step 1/3. Functionally, with CysN forms the ATP sulfurylase (ATPS) that catalyzes the adenylation of sulfate producing adenosine 5'-phosphosulfate (APS) and diphosphate, the first enzymatic step in sulfur assimilation pathway. APS synthesis involves the formation of a high-energy phosphoric-sulfuric acid anhydride bond driven by GTP hydrolysis by CysN coupled to ATP hydrolysis by CysD. In Marinobacter nauticus (strain ATCC 700491 / DSM 11845 / VT8) (Marinobacter aquaeolei), this protein is Sulfate adenylyltransferase subunit 2 1.